Reading from the N-terminus, the 345-residue chain is DNA-directed RNA polymerase subunit alpha (345 aa).

An alpha N-terminal domain (alpha-NTD) region spans residues 1–234; that stretch reads MRKNEMSTSK…DLLTTFLYVR (234 aa). The segment at 266–345 is alpha C-terminal domain (alpha-CTD); sequence LEERVLENRF…DKKIVLNRRK (80 aa).

This sequence belongs to the RNA polymerase alpha chain family. As to quaternary structure, in plastids the minimal PEP RNA polymerase catalytic core is composed of four subunits: alpha, beta, beta', and beta''. When a (nuclear-encoded) sigma factor is associated with the core the holoenzyme is formed, which can initiate transcription.

It localises to the plastid. It is found in the chloroplast. It catalyses the reaction RNA(n) + a ribonucleoside 5'-triphosphate = RNA(n+1) + diphosphate. Its function is as follows. DNA-dependent RNA polymerase catalyzes the transcription of DNA into RNA using the four ribonucleoside triphosphates as substrates. The protein is DNA-directed RNA polymerase subunit alpha of Adiantum capillus-veneris (Maidenhair fern).